The sequence spans 307 residues: UDP-N-acetylenolpyruvoylglucosamine reductase (307 aa).

Positions 33-198 (KVGGPADIFV…LNATFALQKG (166 aa)) constitute an FAD-binding PCMH-type domain. Residue arginine 177 is part of the active site. Residue serine 227 is the Proton donor of the active site. Glutamate 297 is a catalytic residue.

This sequence belongs to the MurB family. Requires FAD as cofactor.

Its subcellular location is the cytoplasm. It carries out the reaction UDP-N-acetyl-alpha-D-muramate + NADP(+) = UDP-N-acetyl-3-O-(1-carboxyvinyl)-alpha-D-glucosamine + NADPH + H(+). The protein operates within cell wall biogenesis; peptidoglycan biosynthesis. Functionally, cell wall formation. This chain is UDP-N-acetylenolpyruvoylglucosamine reductase, found in Clostridium novyi (strain NT).